The sequence spans 350 residues: Phenylalanine--tRNA ligase alpha subunit (350 aa).

Glu260 serves as a coordination point for Mg(2+).

The protein belongs to the class-II aminoacyl-tRNA synthetase family. Phe-tRNA synthetase alpha subunit type 1 subfamily. Tetramer of two alpha and two beta subunits. The cofactor is Mg(2+).

The protein resides in the cytoplasm. It catalyses the reaction tRNA(Phe) + L-phenylalanine + ATP = L-phenylalanyl-tRNA(Phe) + AMP + diphosphate + H(+). This Mycoplasma capricolum subsp. capricolum (strain California kid / ATCC 27343 / NCTC 10154) protein is Phenylalanine--tRNA ligase alpha subunit.